The sequence spans 504 residues: Maturase K (504 aa).

The protein belongs to the intron maturase 2 family. MatK subfamily.

The protein resides in the plastid. It localises to the chloroplast. Functionally, usually encoded in the trnK tRNA gene intron. Probably assists in splicing its own and other chloroplast group II introns. The protein is Maturase K of Turritis glabra (Tower mustard).